Here is a 238-residue protein sequence, read N- to C-terminus: MTYLAPALARIHPDWEAVLDQAAVAARLAEIDRLLVLQQQDGKTLFPPPPQVFNALAFAAPADVKVVILGQDPYHGDGEAMGLSFSVPDGARVPPSLRNIYKELAADLGLGVPASGDLTHWAQQGVLLLNSVLTVERDKAGSHGKLGWQTVSDALIDAVNRDNPGCVFLLWGNWAQTKAERIDASRHLVLTAAHPSPLSASRGFHGCRHFSQVNAWLIARGRQPVRWATAPAAQSCLF.

The active-site Proton acceptor is Asp-72.

The protein belongs to the uracil-DNA glycosylase (UDG) superfamily. UNG family.

Its subcellular location is the cytoplasm. The enzyme catalyses Hydrolyzes single-stranded DNA or mismatched double-stranded DNA and polynucleotides, releasing free uracil.. Excises uracil residues from the DNA which can arise as a result of misincorporation of dUMP residues by DNA polymerase or due to deamination of cytosine. This Chromobacterium violaceum (strain ATCC 12472 / DSM 30191 / JCM 1249 / CCUG 213 / NBRC 12614 / NCIMB 9131 / NCTC 9757 / MK) protein is Uracil-DNA glycosylase.